A 349-amino-acid chain; its full sequence is tRNA pseudouridine synthase D (349 aa).

Phe27 is a binding site for substrate. Asp80 acts as the Nucleophile in catalysis. Asn129 serves as a coordination point for substrate. The 149-residue stretch at 155 to 303 (GVPNYFGAQR…VEAARRAMLL (149 aa)) folds into the TRUD domain. Phe329 contributes to the substrate binding site.

Belongs to the pseudouridine synthase TruD family.

The enzyme catalyses uridine(13) in tRNA = pseudouridine(13) in tRNA. Its function is as follows. Responsible for synthesis of pseudouridine from uracil-13 in transfer RNAs. This Escherichia coli O9:H4 (strain HS) protein is tRNA pseudouridine synthase D.